The sequence spans 721 residues: Polyribonucleotide nucleotidyltransferase (721 aa).

D485 and D491 together coordinate Mg(2+). The region spanning 552-611 (PKIYIVKIHPDKIREIIGPGGKVIRELQAMSNTRIEVDDSGTVKIAASTEEEARIAIKAV) is the KH domain. Positions 621–689 (GEIYEGEVVR…PEGKIRLSRK (69 aa)) constitute an S1 motif domain. The disordered stretch occupies residues 687–721 (SRKALLPAPEKGEEDEKSAPRSRRPGGNSDRRNNR).

It belongs to the polyribonucleotide nucleotidyltransferase family. Requires Mg(2+) as cofactor.

The protein localises to the cytoplasm. The enzyme catalyses RNA(n+1) + phosphate = RNA(n) + a ribonucleoside 5'-diphosphate. In terms of biological role, involved in mRNA degradation. Catalyzes the phosphorolysis of single-stranded polyribonucleotides processively in the 3'- to 5'-direction. The chain is Polyribonucleotide nucleotidyltransferase from Desulfosudis oleivorans (strain DSM 6200 / JCM 39069 / Hxd3) (Desulfococcus oleovorans).